The chain runs to 70 residues: DNA-directed RNA polymerase subunit omega (70 aa).

The protein belongs to the RNA polymerase subunit omega family. As to quaternary structure, the RNAP catalytic core consists of 2 alpha, 1 beta, 1 beta' and 1 omega subunit. When a sigma factor is associated with the core the holoenzyme is formed, which can initiate transcription.

The enzyme catalyses RNA(n) + a ribonucleoside 5'-triphosphate = RNA(n+1) + diphosphate. Functionally, promotes RNA polymerase assembly. Latches the N- and C-terminal regions of the beta' subunit thereby facilitating its interaction with the beta and alpha subunits. The sequence is that of DNA-directed RNA polymerase subunit omega from Bacillus cytotoxicus (strain DSM 22905 / CIP 110041 / 391-98 / NVH 391-98).